The primary structure comprises 188 residues: ATP synthase subunit delta (188 aa).

It belongs to the ATPase delta chain family. F-type ATPases have 2 components, F(1) - the catalytic core - and F(0) - the membrane proton channel. F(1) has five subunits: alpha(3), beta(3), gamma(1), delta(1), epsilon(1). F(0) has three main subunits: a(1), b(2) and c(10-14). The alpha and beta chains form an alternating ring which encloses part of the gamma chain. F(1) is attached to F(0) by a central stalk formed by the gamma and epsilon chains, while a peripheral stalk is formed by the delta and b chains.

The protein resides in the cell inner membrane. In terms of biological role, f(1)F(0) ATP synthase produces ATP from ADP in the presence of a proton or sodium gradient. F-type ATPases consist of two structural domains, F(1) containing the extramembraneous catalytic core and F(0) containing the membrane proton channel, linked together by a central stalk and a peripheral stalk. During catalysis, ATP synthesis in the catalytic domain of F(1) is coupled via a rotary mechanism of the central stalk subunits to proton translocation. Functionally, this protein is part of the stalk that links CF(0) to CF(1). It either transmits conformational changes from CF(0) to CF(1) or is implicated in proton conduction. This is ATP synthase subunit delta from Rhizobium meliloti (strain 1021) (Ensifer meliloti).